Consider the following 785-residue polypeptide: Endonuclease MutS2 (785 aa).

335–342 (GPNTGGKT) lines the ATP pocket. The region spanning 710-785 (LDLRGERYED…GNGVTIVEFK (76 aa)) is the Smr domain.

It belongs to the DNA mismatch repair MutS family. MutS2 subfamily. As to quaternary structure, homodimer. Binds to stalled ribosomes, contacting rRNA.

In terms of biological role, endonuclease that is involved in the suppression of homologous recombination and thus may have a key role in the control of bacterial genetic diversity. Functionally, acts as a ribosome collision sensor, splitting the ribosome into its 2 subunits. Detects stalled/collided 70S ribosomes which it binds and splits by an ATP-hydrolysis driven conformational change. Acts upstream of the ribosome quality control system (RQC), a ribosome-associated complex that mediates the extraction of incompletely synthesized nascent chains from stalled ribosomes and their subsequent degradation. Probably generates substrates for RQC. In Listeria monocytogenes serovar 1/2a (strain ATCC BAA-679 / EGD-e), this protein is Endonuclease MutS2.